A 562-amino-acid polypeptide reads, in one-letter code: NAD-dependent malic enzyme (562 aa).

The Proton donor role is filled by Tyr-101. Arg-154 is an NAD(+) binding site. The Proton acceptor role is filled by Lys-172. Positions 243, 244, and 267 each coordinate a divalent metal cation. NAD(+)-binding residues include Asp-267 and Asn-415.

This sequence belongs to the malic enzymes family. In terms of assembly, homotetramer. Mg(2+) is required as a cofactor. Mn(2+) serves as cofactor.

The catalysed reaction is (S)-malate + NAD(+) = pyruvate + CO2 + NADH. It carries out the reaction oxaloacetate + H(+) = pyruvate + CO2. This chain is NAD-dependent malic enzyme, found in Vibrio campbellii (strain ATCC BAA-1116).